Reading from the N-terminus, the 302-residue chain is Recombination-associated protein RdgC (302 aa).

It belongs to the RdgC family.

It localises to the cytoplasm. The protein resides in the nucleoid. May be involved in recombination. This Xylella fastidiosa (strain 9a5c) protein is Recombination-associated protein RdgC.